Consider the following 287-residue polypeptide: Protease HtpX (287 aa).

The next 2 helical transmembrane spans lie at 4-24 and 36-56; these read VMLF…VLNI and LSGL…ISLM. A Zn(2+)-binding site is contributed by His143. Glu144 is an active-site residue. His147 lines the Zn(2+) pocket. 2 helical membrane-spanning segments follow: residues 158-178 and 192-212; these read LMQG…ANIV and MVYF…ASFI. Glu221 is a binding site for Zn(2+).

The protein belongs to the peptidase M48B family. The cofactor is Zn(2+).

The protein localises to the cell inner membrane. In Vibrio atlanticus (strain LGP32) (Vibrio splendidus (strain Mel32)), this protein is Protease HtpX.